Consider the following 173-residue polypeptide: RNA polymerase sigma factor TcsR (173 aa).

A sigma-70 factor domain-4 region spans residues 122–169; that stretch reads IKDLTQNEKNIIRKIYLDRLRESEISRELNISRQAVNKTHLRALEKLK. The H-T-H motif DNA-binding region spans 143–162; that stretch reads ESEISRELNISRQAVNKTHL.

The protein belongs to the sigma-70 factor family.

Its function is as follows. Sigma factors are initiation factors that promote the attachment of RNA polymerase to specific initiation sites and are then released. Transcriptional regulator specifically required to activate expression of the toxin gene locus, composed of tcsL, tcsH and tcdE/utxA. This Paraclostridium sordellii (Clostridium sordellii) protein is RNA polymerase sigma factor TcsR.